The following is a 444-amino-acid chain: Viral protein kinase (444 aa).

The tract at residues 1 to 25 is disordered; that stretch reads MRWKRMERRPPLTPLRRSRTQSSGG. Residues 90–98 and K108 contribute to the ATP site; that span reads LGRGAFGII. The Proton acceptor role is filled by D201.

In terms of assembly, interacts with protein K-bZIP/K8. Interacts with host beta-catenin/CTNNB1. In terms of processing, AUtophosphorylated.

It is found in the host nucleus. The enzyme catalyses L-seryl-[protein] + ATP = O-phospho-L-seryl-[protein] + ADP + H(+). It catalyses the reaction L-threonyl-[protein] + ATP = O-phospho-L-threonyl-[protein] + ADP + H(+). In terms of biological role, serine/threonine protein kinase that plays a role in viral gene expression, viral DNA replication and encapsidation, and nuclear egress of virions. Regulates host transcriptional activity through interactions with RNA helicase and c-Jun N-terminal kinase (JNK) and viral transcriptional activity through interactions with the viral protein K-bZIP/K8. Induces host chromosome condensation and phosphorylation of histone H3. Phosphorylates the DNA polymerase processivity factor hence modulating its processivity function. Inhibits the host Wnt signaling pathway via direct interactions with beta-catenin/CTNNB1 while the kinase activity of vPK is not required for this inhibitory activity. Also phosphorylates host SAMHD1 and thereby counteracts its antiviral effect by reducing its dNTP hydrolase activity. The protein is Viral protein kinase (vPK) of Human herpesvirus 8 type P (isolate GK18) (HHV-8).